The chain runs to 198 residues: Large ribosomal subunit protein bL25 (198 aa).

It belongs to the bacterial ribosomal protein bL25 family. CTC subfamily. Part of the 50S ribosomal subunit; part of the 5S rRNA/L5/L18/L25 subcomplex. Contacts the 5S rRNA. Binds to the 5S rRNA independently of L5 and L18.

In terms of biological role, this is one of the proteins that binds to the 5S RNA in the ribosome where it forms part of the central protuberance. The polypeptide is Large ribosomal subunit protein bL25 (Azotobacter vinelandii (strain DJ / ATCC BAA-1303)).